The primary structure comprises 259 residues: ATP synthase subunit b 2 (259 aa).

A helical transmembrane segment spans residues 5-27 (WFTVSAQAINFLILVALLKRFLY).

The protein belongs to the ATPase B chain family. F-type ATPases have 2 components, F(1) - the catalytic core - and F(0) - the membrane proton channel. F(1) has five subunits: alpha(3), beta(3), gamma(1), delta(1), epsilon(1). F(0) has three main subunits: a(1), b(2) and c(10-14). The alpha and beta chains form an alternating ring which encloses part of the gamma chain. F(1) is attached to F(0) by a central stalk formed by the gamma and epsilon chains, while a peripheral stalk is formed by the delta and b chains.

The protein resides in the cell inner membrane. Functionally, f(1)F(0) ATP synthase produces ATP from ADP in the presence of a proton or sodium gradient. F-type ATPases consist of two structural domains, F(1) containing the extramembraneous catalytic core and F(0) containing the membrane proton channel, linked together by a central stalk and a peripheral stalk. During catalysis, ATP synthesis in the catalytic domain of F(1) is coupled via a rotary mechanism of the central stalk subunits to proton translocation. In terms of biological role, component of the F(0) channel, it forms part of the peripheral stalk, linking F(1) to F(0). The chain is ATP synthase subunit b 2 from Syntrophotalea carbinolica (strain DSM 2380 / NBRC 103641 / GraBd1) (Pelobacter carbinolicus).